Consider the following 277-residue polypeptide: Bifunctional protein FolD 1 (277 aa).

NADP(+) contacts are provided by residues 162–164 (GDS) and S187.

The protein belongs to the tetrahydrofolate dehydrogenase/cyclohydrolase family. As to quaternary structure, homodimer.

It carries out the reaction (6R)-5,10-methylene-5,6,7,8-tetrahydrofolate + NADP(+) = (6R)-5,10-methenyltetrahydrofolate + NADPH. The catalysed reaction is (6R)-5,10-methenyltetrahydrofolate + H2O = (6R)-10-formyltetrahydrofolate + H(+). Its pathway is one-carbon metabolism; tetrahydrofolate interconversion. Catalyzes the oxidation of 5,10-methylenetetrahydrofolate to 5,10-methenyltetrahydrofolate and then the hydrolysis of 5,10-methenyltetrahydrofolate to 10-formyltetrahydrofolate. In Syntrophomonas wolfei subsp. wolfei (strain DSM 2245B / Goettingen), this protein is Bifunctional protein FolD 1.